A 224-amino-acid polypeptide reads, in one-letter code: Peptidyl-prolyl cis-trans isomerase CYP21-1 (224 aa).

The first 27 residues, 1–27 (MRREISFLLQPRCLLLLVALTIFLVFA), serve as a signal peptide directing secretion. Residues 50-214 (FLDVDIDGQR…KKVVIADSGE (165 aa)) form the PPIase cyclophilin-type domain. Asn-158 carries N-linked (GlcNAc...) asparagine glycosylation.

Belongs to the cyclophilin-type PPIase family. Ubiquitous.

It localises to the endoplasmic reticulum. It catalyses the reaction [protein]-peptidylproline (omega=180) = [protein]-peptidylproline (omega=0). PPIases accelerate the folding of proteins. It catalyzes the cis-trans isomerization of proline imidic peptide bonds in oligopeptides. The chain is Peptidyl-prolyl cis-trans isomerase CYP21-1 (CYP21-1) from Arabidopsis thaliana (Mouse-ear cress).